We begin with the raw amino-acid sequence, 297 residues long: tRNA uridine(34) hydroxylase (297 aa).

Residues 133–228 (SGDEVVFFDG…YGETFKDQGL (96 aa)) enclose the Rhodanese domain. The Cysteine persulfide intermediate role is filled by cysteine 188.

This sequence belongs to the TrhO family.

The catalysed reaction is uridine(34) in tRNA + AH2 + O2 = 5-hydroxyuridine(34) in tRNA + A + H2O. Functionally, catalyzes oxygen-dependent 5-hydroxyuridine (ho5U) modification at position 34 in tRNAs. This chain is tRNA uridine(34) hydroxylase, found in Pseudarthrobacter chlorophenolicus (strain ATCC 700700 / DSM 12829 / CIP 107037 / JCM 12360 / KCTC 9906 / NCIMB 13794 / A6) (Arthrobacter chlorophenolicus).